Here is a 201-residue protein sequence, read N- to C-terminus: Protein OPI10 homolog (201 aa).

This sequence belongs to the OPI10 family.

This is Protein OPI10 homolog from Anopheles gambiae (African malaria mosquito).